The chain runs to 533 residues: 2-isopropylmalate synthase (533 aa).

One can recognise a Pyruvate carboxyltransferase domain in the interval 8 to 269; that stretch reads IIIFDTTLRD…YYNPFLGRPA (262 aa). Mn(2+) is bound by residues aspartate 17, histidine 208, histidine 210, and asparagine 244. Residues 408–533 form a regulatory domain region; it reads RLELVQVSCG…VSANPAKASL (126 aa).

The protein belongs to the alpha-IPM synthase/homocitrate synthase family. LeuA type 1 subfamily. Homodimer. Mn(2+) serves as cofactor.

Its subcellular location is the cytoplasm. It catalyses the reaction 3-methyl-2-oxobutanoate + acetyl-CoA + H2O = (2S)-2-isopropylmalate + CoA + H(+). It participates in amino-acid biosynthesis; L-leucine biosynthesis; L-leucine from 3-methyl-2-oxobutanoate: step 1/4. Catalyzes the condensation of the acetyl group of acetyl-CoA with 3-methyl-2-oxobutanoate (2-ketoisovalerate) to form 3-carboxy-3-hydroxy-4-methylpentanoate (2-isopropylmalate). The protein is 2-isopropylmalate synthase of Picosynechococcus sp. (strain ATCC 27264 / PCC 7002 / PR-6) (Agmenellum quadruplicatum).